Consider the following 91-residue polypeptide: ATP synthase subunit c 1 (91 aa).

Transmembrane regions (helical) follow at residues 4 to 24 (FTMCVFGAAIGMAIGTLGTAI) and 53 to 73 (IGLAMIESLAIYALVVCLIIL).

Belongs to the ATPase C chain family. F-type ATPases have 2 components, F(1) - the catalytic core - and F(0) - the membrane proton channel. F(1) has five subunits: alpha(3), beta(3), gamma(1), delta(1), epsilon(1). F(0) has three main subunits: a(1), b(2) and c(10-14). The alpha and beta chains form an alternating ring which encloses part of the gamma chain. F(1) is attached to F(0) by a central stalk formed by the gamma and epsilon chains, while a peripheral stalk is formed by the delta and b chains.

It localises to the cell inner membrane. Functionally, f(1)F(0) ATP synthase produces ATP from ADP in the presence of a proton or sodium gradient. F-type ATPases consist of two structural domains, F(1) containing the extramembraneous catalytic core and F(0) containing the membrane proton channel, linked together by a central stalk and a peripheral stalk. During catalysis, ATP synthesis in the catalytic domain of F(1) is coupled via a rotary mechanism of the central stalk subunits to proton translocation. In terms of biological role, key component of the F(0) channel; it plays a direct role in translocation across the membrane. A homomeric c-ring of between 10-14 subunits forms the central stalk rotor element with the F(1) delta and epsilon subunits. The polypeptide is ATP synthase subunit c 1 (Pelobacter propionicus (strain DSM 2379 / NBRC 103807 / OttBd1)).